Here is a 95-residue protein sequence, read N- to C-terminus: Protein TusB (95 aa).

This sequence belongs to the DsrH/TusB family. In terms of assembly, heterohexamer, formed by a dimer of trimers. The hexameric TusBCD complex contains 2 copies each of TusB, TusC and TusD. The TusBCD complex interacts with TusE.

It is found in the cytoplasm. In terms of biological role, part of a sulfur-relay system required for 2-thiolation of 5-methylaminomethyl-2-thiouridine (mnm(5)s(2)U) at tRNA wobble positions. The chain is Protein TusB from Enterobacter sp. (strain 638).